The primary structure comprises 369 residues: Serpentine receptor class epsilon-2 (369 aa).

Over 1 to 20 (MLIQYHKISNNDPNRIQLLS) the chain is Extracellular. The helical transmembrane segment at 21–41 (MIFCEIILLIFELFEFAAIIF) threads the bilayer. Over 42–55 (NMSRYQFHFNLKVV) the chain is Cytoplasmic. Residues 56 to 76 (VGYAIFAYWFDIIARITIAFF) traverse the membrane as a helical segment. The Extracellular segment spans residues 77–118 (EIGLFNLDDQTIAVETEKLPWNYKNMFFMLLFCCSTYRVYFM). The chain crosses the membrane as a helical span at residues 119-139 (FLICSVTLLLAVERFLATIWV). The Cytoplasmic segment spans residues 140 to 148 (STYESVQHK). The helical transmembrane segment at 149 to 169 (WVSIVLTSTNSIAGIFGSLLF) threads the bilayer. Residues 170 to 178 (HYELIFDTA) lie on the Extracellular side of the membrane. The helical transmembrane segment at 179-199 (VWCSLGLCFNFVSIFLYVILF) threads the bilayer. At 200–234 (NSNKSKIELCQTREITQSYTLSLRFQLNENLKIMN) the chain is on the cytoplasmic side. Residues 235 to 255 (WIKNSILVVTCFNTLLAGFLI) form a helical membrane-spanning segment. Over 256–274 (ASNNEYLKNDYPVLVKCCH) the chain is Extracellular. Residues 275–295 (TFLNLGIAIYAQVVFFVAILA) traverse the membrane as a helical segment. Topologically, residues 296 to 369 (DRHFRTYFLR…VAKKKRFWRV (74 aa)) are cytoplasmic.

Belongs to the nematode receptor-like protein sre family.

The protein localises to the cell membrane. This Caenorhabditis elegans protein is Serpentine receptor class epsilon-2 (sre-2).